The following is a 448-amino-acid chain: Glutamyl-tRNA reductase (448 aa).

Residues 49–52 (TCNR), S109, 114–116 (ETQ), and Q120 each bind substrate. C50 functions as the Nucleophile in the catalytic mechanism. 189–194 (GAGEMS) provides a ligand contact to NADP(+).

The protein belongs to the glutamyl-tRNA reductase family. As to quaternary structure, homodimer.

It catalyses the reaction (S)-4-amino-5-oxopentanoate + tRNA(Glu) + NADP(+) = L-glutamyl-tRNA(Glu) + NADPH + H(+). It functions in the pathway porphyrin-containing compound metabolism; protoporphyrin-IX biosynthesis; 5-aminolevulinate from L-glutamyl-tRNA(Glu): step 1/2. Catalyzes the NADPH-dependent reduction of glutamyl-tRNA(Glu) to glutamate 1-semialdehyde (GSA). In Staphylococcus aureus (strain bovine RF122 / ET3-1), this protein is Glutamyl-tRNA reductase.